The chain runs to 210 residues: High mobility group protein B2 (210 aa).

K3 carries the post-translational modification N6-acetyllysine. A DNA-binding region (HMG box 1) is located at residues 9-79 (PRGKMSSYAF…RYDREMKNYV (71 aa)). Position 23 is a cysteine sulfonic acid (-SO3H); alternate (C23). Residues C23 and C45 are joined by a disulfide bond. Residue K30 is modified to N6-acetyllysine. S35 carries the phosphoserine modification. At K43 the chain carries N6-acetyllysine. Cysteine sulfonic acid (-SO3H); alternate is present on C45. The tract at residues 71 to 102 (YDREMKNYVPPKGDKKGKKKDPNAPKRPPSAF) is disordered. At K90 the chain carries N6-acetyllysine. Residues 95–163 (PKRPPSAFFL…KYEKDIAAYR (69 aa)) constitute a DNA-binding region (HMG box 2). S100 carries the post-translational modification Phosphoserine. A Cysteine sulfonic acid (-SO3H) modification is found at C106. 2 positions are modified to N6-acetyllysine: K114 and K141. The span at 162 to 172 (YRAKGKSEAGK) shows a compositional bias: basic and acidic residues. A disordered region spans residues 162 to 210 (YRAKGKSEAGKKGPGRPTGSKKKNEPEDEEEEEEEEEEEDDEEEEEDEE). Residues 165 to 180 (KGKSEAGKKGPGRPTG) are required for chemotactic activity. Positions 187–210 (PEDEEEEEEEEEEEDDEEEEEDEE) are enriched in acidic residues.

The protein belongs to the HMGB family. In terms of assembly, interacts with POU2F2, POU2F1 and POU3F1. Component of the RAG complex composed of core components RAG1 and RAG2, and associated component HMGB1 or HMGB2. Component of the SET complex, composed of at least ANP32A, APEX1, HMGB2, NME1, SET and TREX1. Directly interacts with SET. Interacts with LEF1. Reduction/oxidation of cysteine residues Cys-23, Cys-45 and Cys-106 and a possible intramolecular disulfide bond involving Cys-23 and Cys-45 give rise to different redox forms with specific functional activities in various cellular compartments: 1- fully reduced HMGB2 (HMGB2C23hC45hC106h), 2- disulfide HMGB2 (HMGB2C23-C45C106h) and 3- sulfonyl HMGB2 (HMGB2C23soC45soC106so). Widely expressed in embryo. In adult mainly expressed in lymphoid organs and testes. Expressed in primary spermatocytes. Expressed in the superficial zone of articular cartilage.

The protein localises to the nucleus. It is found in the chromosome. It localises to the cytoplasm. The protein resides in the secreted. In terms of biological role, multifunctional protein with various roles in different cellular compartments. May act in a redox sensitive manner. In the nucleus is an abundant chromatin-associated non-histone protein involved in transcription, chromatin remodeling and V(D)J recombination and probably other processes. Binds DNA with a preference to non-canonical DNA structures such as single-stranded DNA. Can bent DNA and enhance DNA flexibility by looping thus providing a mechanism to promote activities on various gene promoters by enhancing transcription factor binding and/or bringing distant regulatory sequences into close proximity. Involved in V(D)J recombination by acting as a cofactor of the RAG complex: acts by stimulating cleavage and RAG protein binding at the 23 bp spacer of conserved recombination signal sequences (RSS). Proposed to be involved in the innate immune response to nucleic acids by acting as a cytoplasmic promiscuous immunogenic DNA/RNA sensor which cooperates with subsequent discriminative sensing by specific pattern recognition receptors. In the extracellular compartment acts as a chemokine. Promotes proliferation and migration of endothelial cells implicating AGER/RAGE. Has antimicrobial activity in gastrointestinal epithelial tissues. Involved in inflammatory response to antigenic stimulus coupled with pro-inflammatory activity. May play a role in germ cell differentiation. Involved in modulation of neurogenesis probably by regulation of neural stem proliferation. Involved in articular cartilage surface maintenance implicating LEF1 and the Wnt/beta-catenin pathway. This is High mobility group protein B2 (Hmgb2) from Mus musculus (Mouse).